The following is a 208-amino-acid chain: Protein-L-isoaspartate O-methyltransferase (208 aa).

Residue S59 is part of the active site.

This sequence belongs to the methyltransferase superfamily. L-isoaspartyl/D-aspartyl protein methyltransferase family.

The protein localises to the cytoplasm. The enzyme catalyses [protein]-L-isoaspartate + S-adenosyl-L-methionine = [protein]-L-isoaspartate alpha-methyl ester + S-adenosyl-L-homocysteine. Its function is as follows. Catalyzes the methyl esterification of L-isoaspartyl residues in peptides and proteins that result from spontaneous decomposition of normal L-aspartyl and L-asparaginyl residues. It plays a role in the repair and/or degradation of damaged proteins. The protein is Protein-L-isoaspartate O-methyltransferase of Yersinia pseudotuberculosis serotype O:1b (strain IP 31758).